A 417-amino-acid polypeptide reads, in one-letter code: Putative transporter AmpG 1 (417 aa).

The next 12 membrane-spanning stretches (helical) occupy residues 7–27 (LCII…TGNT), 42–62 (IGIL…APIF), 78–98 (LSWI…FSFL), 104–124 (LLLF…QDTI), 143–163 (GIYI…AIYL), 171–191 (EIYK…IVGI), 225–245 (ALKP…LVLY), 273–293 (VGKF…GVIM), 301–321 (SIFL…FLEI), 328–348 (LLFI…TAYI), 366–386 (FLSS…GYMV), and 389–409 (FGWQ…LLIL).

Belongs to the major facilitator superfamily.

It is found in the cell inner membrane. This Rickettsia conorii (strain ATCC VR-613 / Malish 7) protein is Putative transporter AmpG 1 (ampG1).